The following is a 138-amino-acid chain: DNA-directed RNA polymerase subunit omega (138 aa).

Residues Asn-117–Ser-138 are disordered. A compositionally biased stretch (polar residues) spans Phe-124–Ser-138.

It belongs to the RNA polymerase subunit omega family. As to quaternary structure, the RNAP catalytic core consists of 2 alpha, 1 beta, 1 beta' and 1 omega subunit. When a sigma factor is associated with the core the holoenzyme is formed, which can initiate transcription.

The catalysed reaction is RNA(n) + a ribonucleoside 5'-triphosphate = RNA(n+1) + diphosphate. Functionally, promotes RNA polymerase assembly. Latches the N- and C-terminal regions of the beta' subunit thereby facilitating its interaction with the beta and alpha subunits. The polypeptide is DNA-directed RNA polymerase subunit omega (Ehrlichia canis (strain Jake)).